Here is a 240-residue protein sequence, read N- to C-terminus: Ribonuclease PH (240 aa).

Phosphate-binding positions include R86 and 124 to 126 (GTR).

This sequence belongs to the RNase PH family. As to quaternary structure, homohexameric ring arranged as a trimer of dimers.

The catalysed reaction is tRNA(n+1) + phosphate = tRNA(n) + a ribonucleoside 5'-diphosphate. Its function is as follows. Phosphorolytic 3'-5' exoribonuclease that plays an important role in tRNA 3'-end maturation. Removes nucleotide residues following the 3'-CCA terminus of tRNAs; can also add nucleotides to the ends of RNA molecules by using nucleoside diphosphates as substrates, but this may not be physiologically important. Probably plays a role in initiation of 16S rRNA degradation (leading to ribosome degradation) during starvation. This Rickettsia prowazekii (strain Madrid E) protein is Ribonuclease PH.